The chain runs to 260 residues: MVLIKVLANLLILQLSYAQKSSELIIGGDECNINEHRFLVALYTSRTLFCGGTLINQEWVLTAAHCNMEDIQIKLGMHSKKVPNEDEQKRVPKEKFFCLSSKNYTLWDKDIMLIRLDSPVKNSAHIAPLSLPSSPPSVGSVCRTMGWGRISSTKETYPDVPHCVNINLLEYEMCRAPYPEFELPATSRTLCAGILEGGKDTCVGDSGGPLICNGQFQGIASWGDDPCAQPHKPAAYTKVFDHLDWIENIIAGNTDASCPP.

The signal sequence occupies residues 1-18 (MVLIKVLANLLILQLSYA). Positions 19–24 (QKSSEL) are excised as a propeptide. Residues 25–251 (IIGGDECNIN…HLDWIENIIA (227 aa)) form the Peptidase S1 domain. 6 cysteine pairs are disulfide-bonded: C31-C163, C50-C66, C98-C258, C142-C212, C174-C191, and C202-C227. The active-site Charge relay system is H65. N103 carries an N-linked (GlcNAc...) asparagine glycan. D110 acts as the Charge relay system in catalysis. S206 (charge relay system) is an active-site residue.

This sequence belongs to the peptidase S1 family. Snake venom subfamily. As to quaternary structure, monomer. In terms of tissue distribution, expressed by the venom gland.

The protein localises to the secreted. Functionally, snake venom serine protease that may act in the hemostasis system of the prey. This chain is Snake venom serine protease pallabin-2 (JZTHR7), found in Gloydius halys (Chinese water mocassin).